The following is a 140-amino-acid chain: 6,7-dimethyl-8-ribityllumazine synthase (140 aa).

5-amino-6-(D-ribitylamino)uracil-binding positions include Phe-11, 43–45 (SFD), and 67–69 (CVI). 72 to 73 (DT) contributes to the (2S)-2-hydroxy-3-oxobutyl phosphate binding site. His-75 functions as the Proton donor in the catalytic mechanism. A 5-amino-6-(D-ribitylamino)uracil-binding site is contributed by Leu-100. Arg-115 contributes to the (2S)-2-hydroxy-3-oxobutyl phosphate binding site.

This sequence belongs to the DMRL synthase family. In terms of assembly, forms an icosahedral capsid composed of 60 subunits, arranged as a dodecamer of pentamers.

It catalyses the reaction (2S)-2-hydroxy-3-oxobutyl phosphate + 5-amino-6-(D-ribitylamino)uracil = 6,7-dimethyl-8-(1-D-ribityl)lumazine + phosphate + 2 H2O + H(+). The protein operates within cofactor biosynthesis; riboflavin biosynthesis; riboflavin from 2-hydroxy-3-oxobutyl phosphate and 5-amino-6-(D-ribitylamino)uracil: step 1/2. Its function is as follows. Catalyzes the formation of 6,7-dimethyl-8-ribityllumazine by condensation of 5-amino-6-(D-ribitylamino)uracil with 3,4-dihydroxy-2-butanone 4-phosphate. This is the penultimate step in the biosynthesis of riboflavin. The polypeptide is 6,7-dimethyl-8-ribityllumazine synthase (Methanococcus vannielii (strain ATCC 35089 / DSM 1224 / JCM 13029 / OCM 148 / SB)).